The primary structure comprises 194 residues: Holliday junction branch migration complex subunit RuvA (194 aa).

Residues 1–64 (MISRLTGKLV…EDAHLLFGFA (64 aa)) form a domain I region. The domain II stretch occupies residues 65–143 (TAEERKTFRQ…AHAVTDGLFA (79 aa)). The flexible linker stretch occupies residues 144–147 (AAPA). The interval 147-194 (AADETEDIVGTLLALGYSEREAKAAVKGVPKGTDVGEGVRLALKNLLK) is domain III.

Belongs to the RuvA family. As to quaternary structure, homotetramer. Forms an RuvA(8)-RuvB(12)-Holliday junction (HJ) complex. HJ DNA is sandwiched between 2 RuvA tetramers; dsDNA enters through RuvA and exits via RuvB. An RuvB hexamer assembles on each DNA strand where it exits the tetramer. Each RuvB hexamer is contacted by two RuvA subunits (via domain III) on 2 adjacent RuvB subunits; this complex drives branch migration. In the full resolvosome a probable DNA-RuvA(4)-RuvB(12)-RuvC(2) complex forms which resolves the HJ.

The protein localises to the cytoplasm. Its function is as follows. The RuvA-RuvB-RuvC complex processes Holliday junction (HJ) DNA during genetic recombination and DNA repair, while the RuvA-RuvB complex plays an important role in the rescue of blocked DNA replication forks via replication fork reversal (RFR). RuvA specifically binds to HJ cruciform DNA, conferring on it an open structure. The RuvB hexamer acts as an ATP-dependent pump, pulling dsDNA into and through the RuvAB complex. HJ branch migration allows RuvC to scan DNA until it finds its consensus sequence, where it cleaves and resolves the cruciform DNA. The chain is Holliday junction branch migration complex subunit RuvA from Neisseria meningitidis serogroup C / serotype 2a (strain ATCC 700532 / DSM 15464 / FAM18).